The primary structure comprises 492 residues: Probable malate:quinone oxidoreductase 1 (492 aa).

Belongs to the MQO family. It depends on FAD as a cofactor.

It carries out the reaction (S)-malate + a quinone = a quinol + oxaloacetate. The protein operates within carbohydrate metabolism; tricarboxylic acid cycle; oxaloacetate from (S)-malate (quinone route): step 1/1. The sequence is that of Probable malate:quinone oxidoreductase 1 from Staphylococcus epidermidis (strain ATCC 12228 / FDA PCI 1200).